A 464-amino-acid chain; its full sequence is GTPase Der (464 aa).

2 consecutive EngA-type G domains span residues 3-166 and 177-350; these read PTIA…AVES and LKMA…QAAT. Residues 9–16, 56–60, 118–121, 183–190, 230–234, and 295–298 contribute to the GTP site; these read GRPNVGKS, DTGGI, NKVD, DTAGV, and NKWD. The KH-like domain occupies 351–435; it reads EKYSTSFLTR…PVRIEYRSGD (85 aa).

The protein belongs to the TRAFAC class TrmE-Era-EngA-EngB-Septin-like GTPase superfamily. EngA (Der) GTPase family. As to quaternary structure, associates with the 50S ribosomal subunit.

In terms of biological role, GTPase that plays an essential role in the late steps of ribosome biogenesis. In Teredinibacter turnerae (strain ATCC 39867 / T7901), this protein is GTPase Der.